We begin with the raw amino-acid sequence, 748 residues long: Semaphorin-3B (748 aa).

The signal sequence occupies residues 1–25 (MGRAEAAAMIPGLALLWVAGLGDTA). A Sema domain is found at 30–512 (RLRLSFQELQ…SRSAVAQIAL (483 aa)). The N-linked (GlcNAc...) asparagine glycan is linked to N82. Cysteines 102 and 113 form a disulfide. N124 is a glycosylation site (N-linked (GlcNAc...) asparagine). Cystine bridges form between C131/C140, C268/C379, C292/C339, C515/C533, and C643/C709. The 99-residue stretch at 561 to 659 (PSTLCSGDSS…FSQPLRRLVL (99 aa)) folds into the Ig-like C2-type domain. The tract at residues 708–748 (MCRPQPGHHSVAADSRRKGRNRRMHVSELRAERGPRSAAHW) is disordered. The span at 732 to 742 (HVSELRAERGP) shows a compositional bias: basic and acidic residues.

The protein belongs to the semaphorin family.

The protein resides in the secreted. Inhibits axonal extension by providing local signals to specify territories inaccessible for growing axons. The protein is Semaphorin-3B (Sema3b) of Mus musculus (Mouse).